The sequence spans 380 residues: Crotonobetainyl-CoA reductase (380 aa).

It belongs to the acyl-CoA dehydrogenase family. Homotetramer. Requires FAD as cofactor.

It localises to the cytoplasm. The catalysed reaction is 4-(trimethylamino)butanoyl-CoA + oxidized [electron-transfer flavoprotein] + H(+) = crotonobetainyl-CoA + reduced [electron-transfer flavoprotein]. The protein operates within amine and polyamine metabolism; carnitine metabolism. In terms of biological role, catalyzes the reduction of crotonobetainyl-CoA to gamma-butyrobetainyl-CoA. The protein is Crotonobetainyl-CoA reductase of Citrobacter koseri (strain ATCC BAA-895 / CDC 4225-83 / SGSC4696).